The following is a 379-amino-acid chain: Forkhead box protein F1 (379 aa).

Residues 1–45 (MSSAPEKQQPPHGGGGGGGGGGGAAMDPASSGPSKAKKTNAGIRR) form a disordered region. Residues 12–24 (HGGGGGGGGGGGA) show a composition bias toward gly residues. The segment at residues 47–138 (EKPPYSYIAL…EFMFEEGSFR (92 aa)) is a DNA-binding region (fork-head).

Expressed in lung and placenta.

The protein localises to the nucleus. Probable transcription activator for a number of lung-specific genes. The sequence is that of Forkhead box protein F1 (FOXF1) from Homo sapiens (Human).